Consider the following 363-residue polypeptide: Ribosomal RNA large subunit methyltransferase M (363 aa).

S-adenosyl-L-methionine-binding positions include S187, 220-223, D239, D259, and D276; that span reads CPGG. Residue K305 is the Proton acceptor of the active site.

It belongs to the class I-like SAM-binding methyltransferase superfamily. RNA methyltransferase RlmE family. RlmM subfamily. Monomer.

Its subcellular location is the cytoplasm. The catalysed reaction is cytidine(2498) in 23S rRNA + S-adenosyl-L-methionine = 2'-O-methylcytidine(2498) in 23S rRNA + S-adenosyl-L-homocysteine + H(+). Functionally, catalyzes the 2'-O-methylation at nucleotide C2498 in 23S rRNA. The chain is Ribosomal RNA large subunit methyltransferase M from Shewanella loihica (strain ATCC BAA-1088 / PV-4).